We begin with the raw amino-acid sequence, 543 residues long: Chaperonin GroEL (543 aa).

Residues 29 to 32, 86 to 90, Gly413, and Asp504 contribute to the ATP site; these read TVGP and DGTTT.

Belongs to the chaperonin (HSP60) family. In terms of assembly, forms a cylinder of 14 subunits composed of two heptameric rings stacked back-to-back. Interacts with the co-chaperonin GroES.

Its subcellular location is the cytoplasm. The enzyme catalyses ATP + H2O + a folded polypeptide = ADP + phosphate + an unfolded polypeptide.. Together with its co-chaperonin GroES, plays an essential role in assisting protein folding. The GroEL-GroES system forms a nano-cage that allows encapsulation of the non-native substrate proteins and provides a physical environment optimized to promote and accelerate protein folding. This is Chaperonin GroEL from Mycoplasma pneumoniae (strain ATCC 29342 / M129 / Subtype 1) (Mycoplasmoides pneumoniae).